A 98-amino-acid chain; its full sequence is UPF0251 protein VC0395_0048/VC395_A0084 (98 aa).

Belongs to the UPF0251 family.

This Vibrio cholerae serotype O1 (strain ATCC 39541 / Classical Ogawa 395 / O395) protein is UPF0251 protein VC0395_0048/VC395_A0084.